The following is a 742-amino-acid chain: Protein-lysine N-methyltransferase SMYD4 (742 aa).

110 to 112 is a binding site for S-adenosyl-L-methionine; sequence RSA. Residues 230–569 form the SET domain; it reads SSLSLNFSTE…SGQEIFHCYG (340 aa). Zn(2+) contacts are provided by Cys295, Cys298, Cys308, Cys311, Cys317, Cys321, His330, and Cys334. An MYND-type zinc finger spans residues 295 to 334; it reads CHHCLKQLLASIPCCGCSYAKYCSQNCADVAWEQYHRTEC. Residues Asn418, 534-535, and Tyr568 each bind S-adenosyl-L-methionine; that span reads NH.

Belongs to the class V-like SAM-binding methyltransferase superfamily.

The protein localises to the nucleus. It is found in the cytoplasm. It catalyses the reaction L-lysyl-[protein] + S-adenosyl-L-methionine = N(6)-methyl-L-lysyl-[protein] + S-adenosyl-L-homocysteine + H(+). Protein-lysine N-methyltransferase. Monomethylates PRMT5, modulating its transcriptional activity. May also act as a histone methyltransferase. Plays a critical role in cardiac development. Acts as a key epigenetic regulator of gene expression during cardiac development via its dual activities as a methyltransferase and negative regulator of HDAC1. The protein is Protein-lysine N-methyltransferase SMYD4 (SMYD4) of Gallus gallus (Chicken).